The sequence spans 151 residues: Ribosome maturation factor RimP (151 aa).

The protein belongs to the RimP family.

The protein localises to the cytoplasm. Required for maturation of 30S ribosomal subunits. The sequence is that of Ribosome maturation factor RimP from Aliivibrio salmonicida (strain LFI1238) (Vibrio salmonicida (strain LFI1238)).